Here is a 393-residue protein sequence, read N- to C-terminus: Myb-related transcription factor, partner of profilin (393 aa).

Over residues 1-11 the composition is skewed to low complexity; that stretch reads MASATAAAAPG. The interval 1 to 21 is disordered; it reads MASATAAAAPGEAEETTRLRK. The Myb-like domain occupies 16-88; it reads TTRLRKPRFS…EVQKRWNDFK (73 aa). Positions 87–90 match the Nuclear localization signal motif; it reads FKRR. Disordered stretches follow at residues 125–254, 290–323, and 348–393; these read GPGV…EQSL, PLLPGTPADPLPPPPPPPPPPPPKPVLPPSAPKV, and IISP…WKSP. Low complexity predominate over residues 142 to 157; sequence AAASSQPQASTASTQR. A compositionally biased stretch (basic and acidic residues) spans 160 to 171; the sequence is LSEDRRQDRRAD. The segment covering 173 to 184 has biased composition (polar residues); sequence PAQSKGGSSSPE. Composition is skewed to pro residues over residues 219–229, 238–247, 296–320, and 359–368; these read PPLPAPPPPPT, SPSPTPPRPT, PADPLPPPPPPPPPPPPKPVLPPSA, and KPLPPAPPLP. Positions 375–393 are enriched in basic residues; that stretch reads HKRRKGFPTRKRRGRWKSP. Short sequence motifs (nuclear localization signal) lie at residues 376 to 379 and 384 to 387; these read KRRK and RKRR.

In terms of assembly, interacts with PFN1. Homodimer and heterodimer with PFN1. In terms of tissue distribution, ubiquitous. Highly expressed in brain, liver and testis. Moderate expression in heart, lung and skeletal muscle. Low expression in spleen and kidney.

The protein localises to the nucleus. In terms of biological role, transcriptional repressor; DNA-binding protein that specifically recognizes the core sequence 5'-YAAC[GT]G-3'. Dimerization with PFN1 reduces its DNA-binding capacity. The polypeptide is Myb-related transcription factor, partner of profilin (Mypop) (Mus musculus (Mouse)).